We begin with the raw amino-acid sequence, 447 residues long: Trimethylamine monooxygenase (447 aa).

FAD is bound by residues S13, E38, Q40, L46, W47, and H63. NADP(+) contacts are provided by W71 and N73. Residues N73 and V126 each coordinate FAD. NADP(+) is bound by residues Y173, A205, S206, S208, and R229. 2 residues coordinate FAD: Q318 and T321. R413 contributes to the NADP(+) binding site.

The protein belongs to the FMO family. FAD is required as a cofactor.

The catalysed reaction is trimethylamine + NADPH + O2 = trimethylamine N-oxide + NADP(+) + H2O. Catalyzes the oxidation of trimethylamine (TMA) to produce trimethylamine N-oxide (TMAO). TMA is the best substrate, but the enzyme can also oxidize methimazole, indole and dimethylamine (DMA). The chain is Trimethylamine monooxygenase from Roseovarius nubinhibens (strain ATCC BAA-591 / DSM 15170 / ISM).